Consider the following 336-residue polypeptide: Abasic site processing protein HMCES (336 aa).

Cys-2 serves as the catalytic Nucleophile. A Thiazolidine linkage to a ring-opened DNA abasic site modification is found at Cys-2. The span at 29–38 (QPEWLREGRY) shows a compositional bias: basic and acidic residues. The tract at residues 29 to 52 (QPEWLREGRYRPSYNKGPQSSGPV) is disordered. The active site involves Glu-127. Residues 283-336 (LKSSQEGSPQKKEDTLPRWKSQFIHSPSPKKSSAGILRQWLGQEGGPPAKKQKA) are disordered.

It belongs to the SOS response-associated peptidase family.

The protein resides in the chromosome. Its activity is regulated as follows. Formation and reversal of DNA-protein cross-link depends on DNA context. Catalyzes formation of the thiazolidine linkage in presence of abasic sites in single-stranded DNA. Mediates the reversal of the thiazolidine cross-link in presence of double stranded DNA. In terms of biological role, sensor of abasic sites in single-stranded DNA (ssDNA) required to preserve genome integrity by promoting error-free repair of abasic sites. Acts as an enzyme that recognizes and binds abasic sites in ssDNA at replication forks and chemically modifies the lesion by forming a covalent cross-link with DNA: forms a stable thiazolidine linkage between a ring-opened abasic site and the alpha-amino and sulfhydryl substituents of its N-terminal catalytic cysteine residue. The HMCES DNA-protein cross-link is then either reversed or degraded. HMCES is able to catalyze the reversal of its thiazolidine cross-link and cycle between a cross-link and a non-cross-linked state depending on DNA context: mediates self-reversal of the thiazolidine cross-link in double stranded DNA, allowing APEX1 to initiate downstream repair of abasic sites. The HMCES DNA-protein cross-link can also be degraded by the SPRTN metalloprotease following unfolding by the BRIP1/FANCJ helicase. Promotes error-free repair of abasic sites by protecting abasic sites from translesion synthesis (TLS) polymerases and endonucleases that are error-prone and would generate mutations and double-strand breaks. Acts as a protease: mediates autocatalytic processing of its N-terminal methionine in order to expose the catalytic cysteine. The HMCES DNA-protein cross-link is then either reversed or degraded. According to a model, the HMCES DNA-protein cross-link. The sequence is that of Abasic site processing protein HMCES from Gallus gallus (Chicken).